We begin with the raw amino-acid sequence, 555 residues long: Potassium-transporting ATPase potassium-binding subunit (555 aa).

The next 10 helical transmembrane spans lie at 2 to 22 (IWVA…PTGI), 60 to 80 (QYAL…YFIF), 130 to 150 (IGIT…VMAF), 173 to 193 (VFLP…VPQT), 246 to 266 (MSNI…PFTY), 278 to 298 (ILFV…TTSE), 374 to 394 (AGFV…GLMV), 412 to 432 (LIAV…ALAL), 483 to 503 (LVMF…AASL), and 525 to 545 (GIFI…MLVL).

This sequence belongs to the KdpA family. The system is composed of three essential subunits: KdpA, KdpB and KdpC.

The protein resides in the cell membrane. Its function is as follows. Part of the high-affinity ATP-driven potassium transport (or Kdp) system, which catalyzes the hydrolysis of ATP coupled with the electrogenic transport of potassium into the cytoplasm. This subunit binds the extracellular potassium ions and delivers the ions to the membrane domain of KdpB through an intramembrane tunnel. The protein is Potassium-transporting ATPase potassium-binding subunit of Bacillus cereus (strain AH820).